The following is a 409-amino-acid chain: L-cysteine:1D-myo-inositol 2-amino-2-deoxy-alpha-D-glucopyranoside ligase (409 aa).

Cys-43 contributes to the Zn(2+) binding site. Residues Cys-43–Thr-46, Thr-58, and Asn-81–Thr-83 each bind L-cysteinyl-5'-AMP. Positions Ile-45–His-55 match the 'HIGH' region motif. A 'ERGGDP' region motif is present at residues Glu-183–Pro-188. Residue Trp-224 participates in L-cysteinyl-5'-AMP binding. Cys-228 provides a ligand contact to Zn(2+). An L-cysteinyl-5'-AMP-binding site is contributed by Gly-246–Asp-248. Zn(2+) is bound at residue His-253. Val-280 contributes to the L-cysteinyl-5'-AMP binding site. Positions Lys-286–Ser-290 match the 'KMSKS' region motif.

The protein belongs to the class-I aminoacyl-tRNA synthetase family. MshC subfamily. Monomer. Zn(2+) is required as a cofactor.

The catalysed reaction is 1D-myo-inositol 2-amino-2-deoxy-alpha-D-glucopyranoside + L-cysteine + ATP = 1D-myo-inositol 2-(L-cysteinylamino)-2-deoxy-alpha-D-glucopyranoside + AMP + diphosphate + H(+). In terms of biological role, catalyzes the ATP-dependent condensation of GlcN-Ins and L-cysteine to form L-Cys-GlcN-Ins. In Streptomyces scabiei (strain 87.22), this protein is L-cysteine:1D-myo-inositol 2-amino-2-deoxy-alpha-D-glucopyranoside ligase.